The primary structure comprises 454 residues: Probable 1,4-beta-D-glucan cellobiohydrolase C (454 aa).

The signal sequence occupies residues 1 to 19; it reads MKHLASSIALTLLLPAVQA. Residues 20–55 form the CBM1 domain; it reads QQTVWGQCGGQGWSGPTSCVAGAACSTLNPYYAQCI. 2 disulfides stabilise this stretch: Cys27-Cys44 and Cys38-Cys54. 2 thr-rich linker regions span residues 59–94 and 95–454; these read TATS…PTVT and ASGN…NPSF. The segment at 68–95 is disordered; sequence TTAATTTSQTTTKPTTTGPTTSAPTVTA. Asp184 is a catalytic residue. Disulfide bonds link Cys185–Cys244 and Cys376–Cys423. Asp230 functions as the Proton donor in the catalytic mechanism. The Nucleophile role is filled by Asp409. Asn413 carries N-linked (GlcNAc...) asparagine glycosylation.

It belongs to the glycosyl hydrolase 6 (cellulase B) family.

It is found in the secreted. It carries out the reaction Hydrolysis of (1-&gt;4)-beta-D-glucosidic linkages in cellulose and cellotetraose, releasing cellobiose from the non-reducing ends of the chains.. Functionally, the biological conversion of cellulose to glucose generally requires three types of hydrolytic enzymes: (1) Endoglucanases which cut internal beta-1,4-glucosidic bonds; (2) Exocellobiohydrolases that cut the disaccharide cellobiose from the non-reducing end of the cellulose polymer chain; (3) Beta-1,4-glucosidases which hydrolyze the cellobiose and other short cello-oligosaccharides to glucose. The polypeptide is Probable 1,4-beta-D-glucan cellobiohydrolase C (cbhC) (Aspergillus fumigatus (strain CBS 144.89 / FGSC A1163 / CEA10) (Neosartorya fumigata)).